The following is a 583-amino-acid chain: Aspartate--tRNA ligase (583 aa).

Glu-174 lines the L-aspartate pocket. The segment at 198–201 (QITK) is aspartate. L-aspartate is bound at residue Arg-220. Residues 220-222 (RDE) and Gln-229 each bind ATP. L-aspartate is bound at residue His-443. An ATP-binding site is contributed by Glu-477. Position 484 (Arg-484) interacts with L-aspartate. 529-532 (GLDR) contributes to the ATP binding site.

This sequence belongs to the class-II aminoacyl-tRNA synthetase family. Type 1 subfamily. In terms of assembly, homodimer.

Its subcellular location is the cytoplasm. It carries out the reaction tRNA(Asp) + L-aspartate + ATP = L-aspartyl-tRNA(Asp) + AMP + diphosphate. In terms of biological role, catalyzes the attachment of L-aspartate to tRNA(Asp) in a two-step reaction: L-aspartate is first activated by ATP to form Asp-AMP and then transferred to the acceptor end of tRNA(Asp). This is Aspartate--tRNA ligase from Streptococcus agalactiae serotype V (strain ATCC BAA-611 / 2603 V/R).